The primary structure comprises 221 residues: Oxaloacetate tautomerase FAHD1, mitochondrial (221 aa).

The N-terminal 24 residues, 1–24, are a transit peptide targeting the mitochondrion; the sequence is MAASRPLSRFWEWGKNIVCVGRNY. Ser-37 carries the phosphoserine modification. Mg(2+)-binding residues include Glu-68, Glu-70, and Asp-99. An N6-acetyllysine modification is found at Lys-110. At Lys-112 the chain carries N6-succinyllysine.

It belongs to the FAH family. In terms of assembly, homodimer. It depends on Mg(2+) as a cofactor. The cofactor is Mn(2+).

It is found in the mitochondrion. It localises to the cytoplasm. The protein localises to the cytosol. The catalysed reaction is oxaloacetate = enol-oxaloacetate. It carries out the reaction oxaloacetate + H(+) = pyruvate + CO2. The enzyme catalyses a 3-acylpyruvate + H2O = a carboxylate + pyruvate + H(+). It catalyses the reaction acetylpyruvate + H2O = acetate + pyruvate + H(+). The catalysed reaction is 3-fumarylpyruvate + H2O = fumarate + pyruvate + H(+). Its activity is regulated as follows. Oxaloacetate decarboxylation is competitively inhibited by oxalate. Functionally, tautomerase that converts enol-oxaloacetate, a strong inhibitor of succinate dehydrogenase, to the physiological keto form of oxaloacetate. It is thereby required to maximize aerobic respiration efficiency by preventing succinate dehydrogenase inhibition. Also acts as a weak oxaloacetate decarboxylase (ODx), catalyzing the decarboxylation of oxaloacetate (OAA) to pyruvate and CO(2), and as such is likely a regulatory enzyme in the TCA cycle. Also displays acylpyruvase activity, being able to hydrolyze acetylpyruvate and fumarylpyruvate in vitro. This Pongo abelii (Sumatran orangutan) protein is Oxaloacetate tautomerase FAHD1, mitochondrial (FAHD1).